Reading from the N-terminus, the 356-residue chain is tRNA N6-adenosine threonylcarbamoyltransferase (356 aa).

Residues histidine 115 and histidine 119 each coordinate Fe cation. Substrate contacts are provided by residues 137-141 (LVSGG), aspartate 170, glycine 183, and asparagine 280. Residue aspartate 308 coordinates Fe cation.

This sequence belongs to the KAE1 / TsaD family. The cofactor is Fe(2+).

The protein resides in the cytoplasm. The enzyme catalyses L-threonylcarbamoyladenylate + adenosine(37) in tRNA = N(6)-L-threonylcarbamoyladenosine(37) in tRNA + AMP + H(+). Required for the formation of a threonylcarbamoyl group on adenosine at position 37 (t(6)A37) in tRNAs that read codons beginning with adenine. Is involved in the transfer of the threonylcarbamoyl moiety of threonylcarbamoyl-AMP (TC-AMP) to the N6 group of A37, together with TsaE and TsaB. TsaD likely plays a direct catalytic role in this reaction. This Paracoccus denitrificans (strain Pd 1222) protein is tRNA N6-adenosine threonylcarbamoyltransferase.